The sequence spans 319 residues: Large ribosomal subunit protein eL8 (319 aa).

Lys-87 carries the post-translational modification N6-acetyllysine. Residue Lys-101 forms a Glycyl lysine isopeptide (Lys-Gly) (interchain with G-Cter in SUMO2) linkage. N6-acetyllysine; alternate is present on Lys-150. Lys-150 is covalently cross-linked (Glycyl lysine isopeptide (Lys-Gly) (interchain with G-Cter in SUMO2); alternate). Residue Lys-178 forms a Glycyl lysine isopeptide (Lys-Gly) (interchain with G-Cter in SUMO2) linkage. Lys-270 carries the post-translational modification N6-acetyllysine. A Glycyl lysine isopeptide (Lys-Gly) (interchain with G-Cter in SUMO2) cross-link involves residue Lys-298.

This sequence belongs to the eukaryotic ribosomal protein eL8 family. In terms of assembly, component of the large ribosomal subunit. Interacts with CRY1. Interacts with DICER1, AGO2, TARBP2, MOV10 and EIF6; they form a large RNA-induced silencing complex (RISC).

It localises to the cytoplasm. In terms of biological role, component of the large ribosomal subunit. The ribosome is a large ribonucleoprotein complex responsible for the synthesis of proteins in the cell. The chain is Large ribosomal subunit protein eL8 (RPL7A) from Oryctolagus cuniculus (Rabbit).